Reading from the N-terminus, the 63-residue chain is Large ribosomal subunit protein uL29 (63 aa).

The protein belongs to the universal ribosomal protein uL29 family.

The chain is Large ribosomal subunit protein uL29 from Idiomarina loihiensis (strain ATCC BAA-735 / DSM 15497 / L2-TR).